Reading from the N-terminus, the 419-residue chain is UDP-N-acetylglucosamine 1-carboxyvinyltransferase (419 aa).

22–23 lines the phosphoenolpyruvate pocket; that stretch reads KN. Arg95 contacts UDP-N-acetyl-alpha-D-glucosamine. The Proton donor role is filled by Cys119. Cys119 is modified (2-(S-cysteinyl)pyruvic acid O-phosphothioketal). UDP-N-acetyl-alpha-D-glucosamine contacts are provided by Asp308 and Ile330.

It belongs to the EPSP synthase family. MurA subfamily.

It localises to the cytoplasm. It carries out the reaction phosphoenolpyruvate + UDP-N-acetyl-alpha-D-glucosamine = UDP-N-acetyl-3-O-(1-carboxyvinyl)-alpha-D-glucosamine + phosphate. Its pathway is cell wall biogenesis; peptidoglycan biosynthesis. In terms of biological role, cell wall formation. Adds enolpyruvyl to UDP-N-acetylglucosamine. The chain is UDP-N-acetylglucosamine 1-carboxyvinyltransferase from Rickettsia bellii (strain OSU 85-389).